We begin with the raw amino-acid sequence, 264 residues long: Ribonuclease HII (264 aa).

Residues 69–263 enclose the RNase H type-2 domain; sequence KVVCGIDEVG…EENAKTITKP (195 aa). 3 residues coordinate a divalent metal cation: Asp75, Glu76, and Asp166.

Belongs to the RNase HII family. The cofactor is Mn(2+). Mg(2+) is required as a cofactor.

The protein localises to the cytoplasm. The enzyme catalyses Endonucleolytic cleavage to 5'-phosphomonoester.. In terms of biological role, endonuclease that specifically degrades the RNA of RNA-DNA hybrids. The sequence is that of Ribonuclease HII from Macrococcus caseolyticus (strain JCSC5402) (Macrococcoides caseolyticum).